Here is a 98-residue protein sequence, read N- to C-terminus: Feather keratin 4 (98 aa).

N-acetylserine is present on Ser2.

Belongs to the avian keratin family. As to quaternary structure, the avian keratins (F-ker, S-ker, C-ker and B-ker) are a complex mixture of very similar polypeptides.

This is Feather keratin 4 from Gallus gallus (Chicken).